The primary structure comprises 519 residues: 2-isopropylmalate synthase (519 aa).

Positions 5 to 267 (VKIFDTTLRD…NTNIRSHEIS (263 aa)) constitute a Pyruvate carboxyltransferase domain. Residues Asp14, His202, His204, and Asn238 each coordinate Mn(2+). Residues 392 to 519 (KLLYLQASSG…KKQQTQTAGV (128 aa)) form a regulatory domain region.

It belongs to the alpha-IPM synthase/homocitrate synthase family. LeuA type 1 subfamily. Homodimer. Mn(2+) serves as cofactor.

It is found in the cytoplasm. The enzyme catalyses 3-methyl-2-oxobutanoate + acetyl-CoA + H2O = (2S)-2-isopropylmalate + CoA + H(+). It participates in amino-acid biosynthesis; L-leucine biosynthesis; L-leucine from 3-methyl-2-oxobutanoate: step 1/4. Catalyzes the condensation of the acetyl group of acetyl-CoA with 3-methyl-2-oxobutanoate (2-ketoisovalerate) to form 3-carboxy-3-hydroxy-4-methylpentanoate (2-isopropylmalate). In Pseudoalteromonas atlantica (strain T6c / ATCC BAA-1087), this protein is 2-isopropylmalate synthase.